Consider the following 342-residue polypeptide: UDP-N-acetylenolpyruvoylglucosamine reductase (342 aa).

In terms of domain architecture, FAD-binding PCMH-type spans Arg-17 to Asp-192. Arg-168 is a catalytic residue. The Proton donor role is filled by Ser-242. Residue Glu-338 is part of the active site.

It belongs to the MurB family. FAD serves as cofactor.

It localises to the cytoplasm. It catalyses the reaction UDP-N-acetyl-alpha-D-muramate + NADP(+) = UDP-N-acetyl-3-O-(1-carboxyvinyl)-alpha-D-glucosamine + NADPH + H(+). It participates in cell wall biogenesis; peptidoglycan biosynthesis. In terms of biological role, cell wall formation. The chain is UDP-N-acetylenolpyruvoylglucosamine reductase from Ralstonia nicotianae (strain ATCC BAA-1114 / GMI1000) (Ralstonia solanacearum).